The chain runs to 443 residues: Trigger factor (443 aa).

In terms of domain architecture, PPIase FKBP-type spans 163 to 249 (KDAAIIDYQA…LKSLKEEILP (87 aa)).

This sequence belongs to the FKBP-type PPIase family. Tig subfamily.

It localises to the cytoplasm. The catalysed reaction is [protein]-peptidylproline (omega=180) = [protein]-peptidylproline (omega=0). In terms of biological role, involved in protein export. Acts as a chaperone by maintaining the newly synthesized protein in an open conformation. Functions as a peptidyl-prolyl cis-trans isomerase. The polypeptide is Trigger factor (Desulfosudis oleivorans (strain DSM 6200 / JCM 39069 / Hxd3) (Desulfococcus oleovorans)).